Here is an 837-residue protein sequence, read N- to C-terminus: A disintegrin and metalloproteinase with thrombospondin motifs 4 (837 aa).

The N-terminal stretch at 1–51 is a signal peptide; it reads MSQTGSHPGRGLAGRWLWGAQPCLLLPIVPLSWLVWLLLLLLASLLPSARL. The propeptide occupies 52-212; it reads ASPLPREEEI…PSPRPRRAKR (161 aa). Residue N68 is glycosylated (N-linked (GlcNAc...) asparagine). The disordered stretch occupies residues 166 to 191; the sequence is EGGTPNSAGGPGAHILRRKSPASGQG. The Cysteine switch signature appears at 192 to 199; it reads PMCNVKAP. C194 provides a ligand contact to Zn(2+). One can recognise a Peptidase M12B domain in the interval 218 to 428; that stretch reads RFVETLVVAD…GYGHCLLDKP (211 aa). 11 disulfide bridges follow: C293-C345, C322-C327, C339-C423, C377-C407, C449-C472, C460-C482, C467-C501, C495-C506, C532-C569, C536-C574, and C547-C559. Residue H361 participates in Zn(2+) binding. Residue E362 is part of the active site. Zn(2+) contacts are provided by H365 and H371. The Disintegrin domain maps to 437-519; sequence TFPGKDYDAD…DQLQDFNIPQ (83 aa). A TSP type-1 domain is found at 520–575; it reads AGGWGPWGPWGDCSRTCGGGVQFSSRDCTRPVPRNGGKYCEGRRTRFRSCNTEDCP. Residues 686 to 837 are spacer; the sequence is SKQSGSFRKF…LRRRPWVGRK (152 aa).

Interacts with SRPX2. Zn(2+) serves as cofactor. The precursor is cleaved by a furin endopeptidase. In terms of processing, glycosylated. Can be O-fucosylated by POFUT2 on a serine or a threonine residue found within the consensus sequence C1-X(2)-(S/T)-C2-G of the TSP type-1 repeat domains where C1 and C2 are the first and second cysteine residue of the repeat, respectively. Fucosylated repeats can then be further glycosylated by the addition of a beta-1,3-glucose residue by the glucosyltransferase, B3GALTL. Fucosylation mediates the efficient secretion of ADAMTS family members. Can also be C-glycosylated with one or two mannose molecules on tryptophan residues within the consensus sequence W-X-X-W of the TPRs, and N-glycosylated. These other glycosylations can also facilitate secretion.

The protein resides in the secreted. The protein localises to the extracellular space. Its subcellular location is the extracellular matrix. The enzyme catalyses Glutamyl endopeptidase. Bonds cleaved include 370-Thr-Glu-Gly-Glu-|-Ala-Arg-Gly-Ser-377 in the interglobular domain of mammalian aggrecan.. Cleaves aggrecan, a cartilage proteoglycan, at the '392-Glu-|-Ala-393' site and may be involved in its turnover. Also cleaves COMP. May play an important role in the destruction of aggrecan in arthritic diseases. The polypeptide is A disintegrin and metalloproteinase with thrombospondin motifs 4 (ADAMTS4) (Pongo abelii (Sumatran orangutan)).